We begin with the raw amino-acid sequence, 433 residues long: tRNA(Ile2) 2-agmatinylcytidine synthetase TiaS (433 aa).

This sequence belongs to the TiaS family.

The protein localises to the cytoplasm. It catalyses the reaction cytidine(34) in tRNA(Ile2) + agmatine + ATP + H2O = 2-agmatinylcytidine(34) in tRNA(Ile2) + AMP + 2 phosphate + 2 H(+). Functionally, ATP-dependent agmatine transferase that catalyzes the formation of 2-agmatinylcytidine (agm2C) at the wobble position (C34) of tRNA(Ile2), converting the codon specificity from AUG to AUA. The polypeptide is tRNA(Ile2) 2-agmatinylcytidine synthetase TiaS (Methanopyrus kandleri (strain AV19 / DSM 6324 / JCM 9639 / NBRC 100938)).